The primary structure comprises 356 residues: MKILEKDLRKGYLKILPEDQDDLWALYNIIKPLDRVTATTSRDIKHGETSSSRRIPMTLTIEVKTLEFQPFTERLRIRGIVVEGPERYGVKGHYHTLNIEPGKPLIIWKEKWSENELEIISRFTSRKQKVLLATFDYDEAAIALLTEQGIRLLEEFTSNIPGKREPVLFQKGLEKYLSSIAEKILDYINKFQVDIVVIASPGDLQKRVARIIKEKKPVNIITDTVSIGGQSGIRELLRRDSVREAVKETNIIKAQRILDEFHKNLSKNPDMVAYGIDDVEYAVKYNAVDKLLVSEELLRIYDEEVRRRVSSILNEAYKRRAEIIIVPHNSDVGLEVEGLGGIVALLRYPLKKPLNN.

The protein belongs to the eukaryotic release factor 1 family. Pelota subfamily. As to quaternary structure, monomer. Requires a divalent metal cation as cofactor.

The protein resides in the cytoplasm. Its function is as follows. May function in recognizing stalled ribosomes, interact with stem-loop structures in stalled mRNA molecules, and effect endonucleolytic cleavage of the mRNA. May play a role in the release non-functional ribosomes and degradation of damaged mRNAs. Has endoribonuclease activity. The chain is Protein pelota homolog from Staphylothermus marinus (strain ATCC 43588 / DSM 3639 / JCM 9404 / F1).